Here is a 92-residue protein sequence, read N- to C-terminus: Progonadoliberin-1 (92 aa).

The first 23 residues, Met1–Ala23, serve as a signal peptide directing secretion. Gln24 carries the pyrrolidone carboxylic acid modification. A Glycine amide modification is found at Gly33.

Belongs to the GnRH family.

It localises to the secreted. In terms of biological role, stimulates the secretion of gonadotropins. This is Progonadoliberin-1 (GNRH1) from Gallus gallus (Chicken).